The chain runs to 312 residues: Olfactory receptor 1D2 (312 aa).

At 1-25 (MDGGNQSEGSEFLLLGMSESPEQQR) the chain is on the extracellular side. Residue Asn-5 is glycosylated (N-linked (GlcNAc...) asparagine). A helical transmembrane segment spans residues 26-49 (ILFWMFLSMYLVTVVGNVLIILAI). The Cytoplasmic segment spans residues 50-57 (SSDSRLHT). Residues 58 to 79 (PVYFFLANLSFTDLFFVTNTIP) traverse the membrane as a helical segment. Residues 80-100 (KMLVNLQSHNKAISYAGCLTQ) lie on the Extracellular side of the membrane. A disulfide bridge connects residues Cys-97 and Cys-189. The helical transmembrane segment at 101-120 (LYFLVSLVALDNLILAVMAY) threads the bilayer. At 121 to 139 (DRYVAICCPLHYTTAMSPK) the chain is on the cytoplasmic side. A helical transmembrane segment spans residues 140 to 158 (LCILLLSLCWVLSVLYGLI). The Extracellular portion of the chain corresponds to 159 to 196 (HTLLMTRVTFCGSRKIHYIFCEMYVLLRMACSNIQINH). Residue Asn-195 is glycosylated (N-linked (GlcNAc...) asparagine). A helical transmembrane segment spans residues 197–219 (TVLIATGCFIFLIPFGFVIISYV). Topologically, residues 220–236 (LIIRAILRIPSVSKKYK) are cytoplasmic. A helical transmembrane segment spans residues 237–259 (AFSTCASHLGAVSLFYGTLCMVY). Over 260–271 (LKPLHTYSVKDS) the chain is Extracellular. The chain crosses the membrane as a helical span at residues 272–291 (VATVMYAVVTPMMNPFIYSL). Residues 292-312 (RNKDMHGALGRLLDKHFKRLT) are Cytoplasmic-facing.

Belongs to the G-protein coupled receptor 1 family. Expressed in testis. Expressed in spermatozoa (at protein level). Expressed in olfactory epithelium.

Its subcellular location is the cell membrane. Functionally, odorant receptor which may be involved in sperm chemotaxis. Bourgeonal is a strong chemoattractant for sperm in vitro and is shown to be a strong agonist for OR1D2 in vitro. May also function in olfactory reception. The protein is Olfactory receptor 1D2 (OR1D2) of Homo sapiens (Human).